We begin with the raw amino-acid sequence, 421 residues long: Gamma-glutamyl phosphate reductase (421 aa).

Belongs to the gamma-glutamyl phosphate reductase family.

The protein localises to the cytoplasm. The enzyme catalyses L-glutamate 5-semialdehyde + phosphate + NADP(+) = L-glutamyl 5-phosphate + NADPH + H(+). The protein operates within amino-acid biosynthesis; L-proline biosynthesis; L-glutamate 5-semialdehyde from L-glutamate: step 2/2. Its function is as follows. Catalyzes the NADPH-dependent reduction of L-glutamate 5-phosphate into L-glutamate 5-semialdehyde and phosphate. The product spontaneously undergoes cyclization to form 1-pyrroline-5-carboxylate. This chain is Gamma-glutamyl phosphate reductase, found in Acinetobacter baumannii (strain ACICU).